Consider the following 366-residue polypeptide: Probable glucuronokinase 2 (366 aa).

126 to 136 provides a ligand contact to ATP; it reads PRQTGLSGSSA. The active-site Proton acceptor is the aspartate 179.

Belongs to the GHMP kinase family. It depends on Mg(2+) as a cofactor. Requires Mn(2+) as cofactor. The cofactor is Co(2+).

The catalysed reaction is D-glucuronate + ATP = 1-phospho-alpha-D-glucuronate + ADP + H(+). Its function is as follows. Sugar-1-kinase with a strict substrate specificity for D-glucuronic acid and ATP. Involved in the biosynthesis of UDP-glucuronic acid (UDP-GlcA), providing nucleotide sugars for cell-wall polymers. May be also involved in a salvage pathway for glucuronic acid. The chain is Probable glucuronokinase 2 (GLCAK2) from Arabidopsis thaliana (Mouse-ear cress).